The sequence spans 281 residues: MQKIAIITDSSCDLTIDEIKDYNLNILPLKIIYKDREYNDIFDIKPIDVYENLHNEVPTTSLCSPDYINSVLDKLEAEGYTHLIGIFISSSLSGTFNAARLVIEERSSFKYYLFDSKIIGYPLGSIVIKAAEFVKEGKSFEEIIEALSIIREATTGFYTLNTLEYLRRGGRIGKVAGTVGDLLHLKPIISVDEHGAYTTIAKARGRKQSLKKLASIILEHLDEGKCNVAILNGMAEEEANQVLDSISSHPNLLKSQVRAIGAAMGVHAGPGMVGVSIQKEI.

Residues 4 to 279 (IAIITDSSCD…PGMVGVSIQK (276 aa)) enclose the DegV domain. 2 residues coordinate hexadecanoate: Thr60 and Ser93.

Functionally, may bind long-chain fatty acids, such as palmitate, and may play a role in lipid transport or fatty acid metabolism. This is DegV domain-containing protein CPE2509 from Clostridium perfringens (strain 13 / Type A).